Here is a 2136-residue protein sequence, read N- to C-terminus: Protein CELLULOSE SYNTHASE INTERACTIVE 3 (2136 aa).

ARM repeat units lie at residues 27-66 (MEMD…LLGI), 71-111 (REAR…VLCK), 113-152 (KDLR…EVSS), 159-201 (HIGM…NLCG), 204-243 (DGYW…RLVL), 246-286 (CDSI…ALSA), 289-337 (DEAK…NVFG), 376-417 (PESS…SLYG), 419-458 (SSLS…GLCH), 461-500 (VGIW…ILTA), 503-542 (DDSK…NLCC), 545-584 (EEIR…KLVH), 586-618 (ADPA…HVLS), 619-663 (KASQ…DLFS), 666-705 (QDIC…ALSR), 711-750 (NNKK…NLLS), 752-791 (PDIA…QLLK), 811-848 (SLVD…FSYP), 849-887 (PWIA…RLCS), 936-980 (QLIT…GFLE), 1013-1041 (SVDA…YTSS), 1042-1083 (AQAE…TLAV), 1109-1149 (RGIN…SLVK), 1163-1204 (EDVR…RIAD), 1207-1247 (DTNK…VLFS), 1249-1288 (HELR…ELFD), 1290-1329 (ENIR…KLSS), 1333-1375 (SNTA…VVFS), 1377-1416 (KNIR…ILLD), 1418-1457 (EQHL…KLGK), 1460-1499 (VPRK…ILTN), 1518-1546 (AVLL…KQQT), 1547-1585 (LEAF…HFLT), 1587-1626 (EDFQ…KISA), 1628-1669 (WPKA…NILQ), 1670-1704 (YDAE…ALML), 1710-1750 (ASST…NNPR), 1790-1833 (SQHE…NFVM), 1836-1875 (RTNR…FLFS), 1921-1960 (PKLR…LLRH), 1969-2008 (VAKS…CLPG), and 2010-2035 (LTVN…QLTI). The C2 domain occupies 1989–2106 (KTCPPRFHDK…VTEGEYSGSL (118 aa)).

As to quaternary structure, associates with cellulase synthase (CESA) complexes. Binds to cortical microtubules. Interacts with CESA3 and CESA6. In terms of tissue distribution, expressed in dark-grown hypocotyls, leaves (confined to vasculature and trichomes), stamen, pollen, developing siliques, and roots. Restricted in meristematic tissue of the shoot and root. Present in distinct punctae at the cell cortex, called microtubule-associated cellulose synthase compartments, that move with constant velocities of 10 to 3000 nm/min.

Its subcellular location is the cell membrane. It is found in the cytoplasm. It localises to the cytoskeleton. The protein resides in the endomembrane system. Regulator of the microtubular cytoskeleton. Microtubule-associated protein involved in the association of cellulase synthase (CESA) complexes (CSCs) and cortical microtubules. Promotes dynamics of CSCs in the plasma membrane in both microtubules-dependent and microtubules-independent manners. Regulates primary cell wall biosynthesis and cellulose microfibrils organization. This Arabidopsis thaliana (Mouse-ear cress) protein is Protein CELLULOSE SYNTHASE INTERACTIVE 3.